The chain runs to 352 residues: tRNA pseudouridine synthase D (352 aa).

Asp81 (nucleophile) is an active-site residue. The TRUD domain maps to 157 to 303 (GIPNYFGAQR…MSHERRILRL (147 aa)).

This sequence belongs to the pseudouridine synthase TruD family.

It catalyses the reaction uridine(13) in tRNA = pseudouridine(13) in tRNA. Responsible for synthesis of pseudouridine from uracil-13 in transfer RNAs. The chain is tRNA pseudouridine synthase D from Pseudomonas fluorescens (strain Pf0-1).